The following is a 425-amino-acid chain: Dihydroorotase (425 aa).

Zn(2+) contacts are provided by H60 and H62. Residues 62 to 64 and N94 each bind substrate; that span reads HLR. Zn(2+) is bound by residues D152, H179, and H232. N278 serves as a coordination point for substrate. D305 is a Zn(2+) binding site. Residue D305 is part of the active site. Substrate is bound at residue H309.

Belongs to the metallo-dependent hydrolases superfamily. DHOase family. Class I DHOase subfamily. Requires Zn(2+) as cofactor.

It carries out the reaction (S)-dihydroorotate + H2O = N-carbamoyl-L-aspartate + H(+). The protein operates within pyrimidine metabolism; UMP biosynthesis via de novo pathway; (S)-dihydroorotate from bicarbonate: step 3/3. Its function is as follows. Catalyzes the reversible cyclization of carbamoyl aspartate to dihydroorotate. In Syntrophotalea carbinolica (strain DSM 2380 / NBRC 103641 / GraBd1) (Pelobacter carbinolicus), this protein is Dihydroorotase.